Reading from the N-terminus, the 280-residue chain is 4-hydroxy-3-methylbut-2-enyl diphosphate reductase (280 aa).

Residue Cys12 coordinates [4Fe-4S] cluster. (2E)-4-hydroxy-3-methylbut-2-enyl diphosphate is bound by residues His40 and His72. His40 and His72 together coordinate dimethylallyl diphosphate. Isopentenyl diphosphate is bound by residues His40 and His72. A [4Fe-4S] cluster-binding site is contributed by Cys94. (2E)-4-hydroxy-3-methylbut-2-enyl diphosphate is bound at residue His122. His122 is a binding site for dimethylallyl diphosphate. His122 contributes to the isopentenyl diphosphate binding site. Catalysis depends on Glu124, which acts as the Proton donor. (2E)-4-hydroxy-3-methylbut-2-enyl diphosphate is bound at residue Thr160. Cys188 provides a ligand contact to [4Fe-4S] cluster. Residues Ser216, Asn218, and Ser260 each coordinate (2E)-4-hydroxy-3-methylbut-2-enyl diphosphate. 3 residues coordinate dimethylallyl diphosphate: Ser216, Asn218, and Ser260. Ser216, Asn218, and Ser260 together coordinate isopentenyl diphosphate.

This sequence belongs to the IspH family. It depends on [4Fe-4S] cluster as a cofactor.

The enzyme catalyses isopentenyl diphosphate + 2 oxidized [2Fe-2S]-[ferredoxin] + H2O = (2E)-4-hydroxy-3-methylbut-2-enyl diphosphate + 2 reduced [2Fe-2S]-[ferredoxin] + 2 H(+). The catalysed reaction is dimethylallyl diphosphate + 2 oxidized [2Fe-2S]-[ferredoxin] + H2O = (2E)-4-hydroxy-3-methylbut-2-enyl diphosphate + 2 reduced [2Fe-2S]-[ferredoxin] + 2 H(+). The protein operates within isoprenoid biosynthesis; dimethylallyl diphosphate biosynthesis; dimethylallyl diphosphate from (2E)-4-hydroxy-3-methylbutenyl diphosphate: step 1/1. Its pathway is isoprenoid biosynthesis; isopentenyl diphosphate biosynthesis via DXP pathway; isopentenyl diphosphate from 1-deoxy-D-xylulose 5-phosphate: step 6/6. Functionally, catalyzes the conversion of 1-hydroxy-2-methyl-2-(E)-butenyl 4-diphosphate (HMBPP) into a mixture of isopentenyl diphosphate (IPP) and dimethylallyl diphosphate (DMAPP). Acts in the terminal step of the DOXP/MEP pathway for isoprenoid precursor biosynthesis. The polypeptide is 4-hydroxy-3-methylbut-2-enyl diphosphate reductase (Trichlorobacter lovleyi (strain ATCC BAA-1151 / DSM 17278 / SZ) (Geobacter lovleyi)).